We begin with the raw amino-acid sequence, 245 residues long: Ribonuclease 3 (245 aa).

The 130-residue stretch at 17-146 (FAKKMNELGF…FVGALYLDQG (130 aa)) folds into the RNase III domain. Mg(2+) is bound at residue E59. D63 is a catalytic residue. Mg(2+) contacts are provided by D132 and E135. The active site involves E135. Positions 172–241 (DFKTQFQEYV…AESAYSKLKS (70 aa)) constitute a DRBM domain. The disordered stretch occupies residues 217-245 (ATGQGKTKKESEQKAAESAYSKLKSNNNL).

This sequence belongs to the ribonuclease III family. As to quaternary structure, homodimer. Mg(2+) is required as a cofactor.

It is found in the cytoplasm. The catalysed reaction is Endonucleolytic cleavage to 5'-phosphomonoester.. Its function is as follows. Digests double-stranded RNA. Involved in the processing of primary rRNA transcript to yield the immediate precursors to the large and small rRNAs (23S and 16S). Processes some mRNAs, and tRNAs when they are encoded in the rRNA operon. Processes pre-crRNA and tracrRNA of type II CRISPR loci if present in the organism. This chain is Ribonuclease 3, found in Staphylococcus haemolyticus (strain JCSC1435).